The chain runs to 229 residues: Peptidase E (229 aa).

Residues serine 120, aspartate 135, and histidine 157 each act as charge relay system in the active site.

This sequence belongs to the peptidase S51 family.

Its subcellular location is the cytoplasm. The catalysed reaction is Dipeptidase E catalyzes the hydrolysis of dipeptides Asp-|-Xaa. It does not act on peptides with N-terminal Glu, Asn or Gln, nor does it cleave isoaspartyl peptides.. In terms of biological role, hydrolyzes dipeptides containing N-terminal aspartate residues. May play a role in allowing the cell to use peptide aspartate to spare carbon otherwise required for the synthesis of the aspartate family of amino acids. The sequence is that of Peptidase E from Salmonella schwarzengrund (strain CVM19633).